Reading from the N-terminus, the 151-residue chain is MKVWVDADACPGVIKEILFRVADRAKVEVTLVANHWMRIPPSPFINLKTVSSGFDVADDEIVKLLSAGDLVITADIPLASEVIDKGGVALNPRGELYTEQNIKSILNMRDFMDTMRASGVQTGGPAAIGASEKQAFGNQLDRFITKHHKPS.

It belongs to the UPF0178 family.

This is UPF0178 protein Shal_3046 from Shewanella halifaxensis (strain HAW-EB4).